The following is a 238-amino-acid chain: Ribonuclease PH (238 aa).

Phosphate is bound by residues R86 and 124-126 (GTR).

It belongs to the RNase PH family. In terms of assembly, homohexameric ring arranged as a trimer of dimers.

It catalyses the reaction tRNA(n+1) + phosphate = tRNA(n) + a ribonucleoside 5'-diphosphate. Phosphorolytic 3'-5' exoribonuclease that plays an important role in tRNA 3'-end maturation. Removes nucleotide residues following the 3'-CCA terminus of tRNAs; can also add nucleotides to the ends of RNA molecules by using nucleoside diphosphates as substrates, but this may not be physiologically important. Probably plays a role in initiation of 16S rRNA degradation (leading to ribosome degradation) during starvation. The polypeptide is Ribonuclease PH (Actinobacillus succinogenes (strain ATCC 55618 / DSM 22257 / CCUG 43843 / 130Z)).